The primary structure comprises 172 residues: Gastrula zinc finger protein XlCGF51.1A (172 aa).

6 consecutive C2H2-type zinc fingers follow at residues 6–28 (FSCS…NKIH), 34–56 (LICS…QRSH), 62–84 (FSCT…QRTH), 90–112 (FSCT…MLKH), 122–144 (LDCS…RKSH), and 150–172 (LQCS…QRVH).

Belongs to the krueppel C2H2-type zinc-finger protein family.

It localises to the nucleus. In terms of biological role, may be involved in transcriptional regulation. The sequence is that of Gastrula zinc finger protein XlCGF51.1A from Xenopus laevis (African clawed frog).